We begin with the raw amino-acid sequence, 444 residues long: Ribosomal protein uS12 methylthiotransferase RimO (444 aa).

An MTTase N-terminal domain is found at 1-117; sequence MKVGIISLGC…ITEVISSALK (117 aa). [4Fe-4S] cluster contacts are provided by Cys-10, Cys-46, Cys-80, Cys-154, Cys-158, and Cys-161. In terms of domain architecture, Radical SAM core spans 140–370; sequence YQPGPSAYIK…WEVQKEITRK (231 aa). The TRAM domain maps to 373–441; that stretch reads EGLVGTEMRV…DYDLIGEMTN (69 aa).

Belongs to the methylthiotransferase family. RimO subfamily. [4Fe-4S] cluster serves as cofactor.

The protein localises to the cytoplasm. The catalysed reaction is L-aspartate(89)-[ribosomal protein uS12]-hydrogen + (sulfur carrier)-SH + AH2 + 2 S-adenosyl-L-methionine = 3-methylsulfanyl-L-aspartate(89)-[ribosomal protein uS12]-hydrogen + (sulfur carrier)-H + 5'-deoxyadenosine + L-methionine + A + S-adenosyl-L-homocysteine + 2 H(+). Catalyzes the methylthiolation of an aspartic acid residue of ribosomal protein uS12. In Natranaerobius thermophilus (strain ATCC BAA-1301 / DSM 18059 / JW/NM-WN-LF), this protein is Ribosomal protein uS12 methylthiotransferase RimO.